The chain runs to 62 residues: Photosystem II reaction center protein Z (62 aa).

2 helical membrane-spanning segments follow: residues 8-28 and 41-61; these read AVFA…VVFA and FSGT…NSLI.

It belongs to the PsbZ family. PSII is composed of 1 copy each of membrane proteins PsbA, PsbB, PsbC, PsbD, PsbE, PsbF, PsbH, PsbI, PsbJ, PsbK, PsbL, PsbM, PsbT, PsbY, PsbZ, Psb30/Ycf12, at least 3 peripheral proteins of the oxygen-evolving complex and a large number of cofactors. It forms dimeric complexes.

Its subcellular location is the plastid. It is found in the chloroplast thylakoid membrane. May control the interaction of photosystem II (PSII) cores with the light-harvesting antenna, regulates electron flow through the 2 photosystem reaction centers. PSII is a light-driven water plastoquinone oxidoreductase, using light energy to abstract electrons from H(2)O, generating a proton gradient subsequently used for ATP formation. This chain is Photosystem II reaction center protein Z, found in Nymphaea alba (White water-lily).